The primary structure comprises 439 residues: Protein PHYTOCHROME KINASE SUBSTRATE 1 (439 aa).

The segment covering 1 to 14 (MVTLTPSSASTPKT) has biased composition (polar residues). 3 disordered regions span residues 1–22 (MVTL…MKNN), 54–80 (KTLN…APED), and 100–139 (QGSS…SSWN). Over residues 63 to 79 (KQEEFGDEKKMVKKAPE) the composition is skewed to basic and acidic residues. Composition is skewed to polar residues over residues 100-109 (QGSSVLSLTN) and 118-139 (DSKQ…SSWN). S238 and S244 each carry phosphoserine. Disordered regions lie at residues 259–311 (LPLP…PTCY) and 355–439 (TAKS…LYSQ). The segment covering 412–421 (TKPKSFETRR) has biased composition (basic and acidic residues). Residues 424-439 (SNSSISHTQSSLLYSQ) show a composition bias toward low complexity.

The protein belongs to the PKS family. Interacts with PKS2, RPT3, PHOT1, PHOT2 and the C-termini of both phytochromes A (phyA) and B (phyB). Binds both spectral forms of phytochrome, Pr and Pfr. In terms of processing, phosphorylated on Ser and to a lower extent on Thr by phytochromes. Phosphorylation is stimulated twofold by red light. As to expression, expressed in young seedlings in both darkness and light. Moderate in leaves and very low in roots and flowers. Expressed in the elongation zone of the root and hypocotyl.

The protein resides in the cell membrane. In terms of biological role, may be responsible for light-regulated cytoplasmic sequestration of phytochromes or may be a negative regulator of phytochrome B signaling. Component of the network that modulates the very low-fluence response (VLFR) branch of phyA signaling. Acts positively in PHOT1 signaling. Regulates phytochrome-mediated photomorphogenesis and hypocotyl phototropism. Involved in the control of leaf flattening and leaf positioning. Promotes negative root phototropism and negatively regulates root gravitropism. May act by controlling auxin homeostasis. This Arabidopsis thaliana (Mouse-ear cress) protein is Protein PHYTOCHROME KINASE SUBSTRATE 1 (PKS1).